A 283-amino-acid polypeptide reads, in one-letter code: Pantothenate synthetase (283 aa).

34–41 contributes to the ATP binding site; sequence MGALHDGH. H41 acts as the Proton donor in catalysis. Residue Q65 coordinates (R)-pantoate. Residue Q65 coordinates beta-alanine. 152 to 155 serves as a coordination point for ATP; sequence GEKD. Position 158 (Q158) interacts with (R)-pantoate. Residues V181 and 189–192 each bind ATP; that span reads MSSR.

It belongs to the pantothenate synthetase family. Homodimer.

The protein localises to the cytoplasm. The enzyme catalyses (R)-pantoate + beta-alanine + ATP = (R)-pantothenate + AMP + diphosphate + H(+). Its pathway is cofactor biosynthesis; (R)-pantothenate biosynthesis; (R)-pantothenate from (R)-pantoate and beta-alanine: step 1/1. Its function is as follows. Catalyzes the condensation of pantoate with beta-alanine in an ATP-dependent reaction via a pantoyl-adenylate intermediate. This is Pantothenate synthetase from Bradyrhizobium sp. (strain BTAi1 / ATCC BAA-1182).